The chain runs to 113 residues: Large ribosomal subunit protein uL24 (113 aa).

Belongs to the universal ribosomal protein uL24 family. Part of the 50S ribosomal subunit.

Its function is as follows. One of two assembly initiator proteins, it binds directly to the 5'-end of the 23S rRNA, where it nucleates assembly of the 50S subunit. Functionally, one of the proteins that surrounds the polypeptide exit tunnel on the outside of the subunit. The polypeptide is Large ribosomal subunit protein uL24 (Rickettsia typhi (strain ATCC VR-144 / Wilmington)).